The sequence spans 345 residues: Delta(1)-pyrroline-2-carboxylate reductase (345 aa).

The Charge relay system role is filled by Ser-47. The active-site Proton donor is the His-48. Residue Arg-52 coordinates substrate. 121-125 (HFSAL) is a binding site for NADP(+). Thr-161 contacts substrate. 179–181 (DFA) contributes to the NADP(+) binding site. 187–188 (RG) contacts substrate. Glu-189 functions as the Charge relay system in the catalytic mechanism. NADP(+)-binding positions include 230–231 (HK) and 305–311 (RLPSGRR).

Belongs to the LDH2/MDH2 oxidoreductase family. As to quaternary structure, homodimer.

It catalyses the reaction L-proline + NAD(+) = 1-pyrroline-2-carboxylate + NADH + H(+). The enzyme catalyses L-proline + NADP(+) = 1-pyrroline-2-carboxylate + NADPH + H(+). Functionally, catalyzes the reduction of Delta(1)-pyrroline-2-carboxylate (Pyr2C) to L-proline, using NADPH as the electron donor. Is likely involved in a degradation pathway that converts trans-3-hydroxy-L-proline (t3LHyp) to L-proline, which would allow A.tumefaciens to grow on t3LHyp as a sole carbon source. This Agrobacterium fabrum (strain C58 / ATCC 33970) (Agrobacterium tumefaciens (strain C58)) protein is Delta(1)-pyrroline-2-carboxylate reductase.